Reading from the N-terminus, the 328-residue chain is GTPase Obg 2 (328 aa).

In terms of domain architecture, Obg spans 1 to 139; sequence MSFRREKFIE…HCVLLKLKIV (139 aa). Residues 140-309 form the OBG-type G domain; that stretch reads SDVGIIGMPN…LHAQVKKAVV (170 aa). GTP is bound by residues 146 to 153, 171 to 175, 192 to 195, 259 to 262, and 290 to 292; these read GMPNAGKS, FTTLE, DIPG, NKCD, and GDE. S153 and T173 together coordinate Mg(2+).

The protein belongs to the TRAFAC class OBG-HflX-like GTPase superfamily. OBG GTPase family. As to quaternary structure, monomer. Mg(2+) is required as a cofactor.

The protein localises to the cytoplasm. Its function is as follows. An essential GTPase which binds GTP, GDP and possibly (p)ppGpp with moderate affinity, with high nucleotide exchange rates and a fairly low GTP hydrolysis rate. Plays a role in control of the cell cycle, stress response, ribosome biogenesis and in those bacteria that undergo differentiation, in morphogenesis control. The sequence is that of GTPase Obg 2 from Anaplasma marginale (strain St. Maries).